Here is a 1084-residue protein sequence, read N- to C-terminus: AP-3 complex subunit beta-1 (1084 aa).

Residues M1–Q11 show a composition bias toward polar residues. Residues M1 to S26 are disordered. Residues S276 and S609 each carry the phosphoserine modification. Residues A663–N800 form a disordered region. Over residues A666–S677 the composition is skewed to basic and acidic residues. Residues E678–G717 are compositionally biased toward acidic residues. Residues E718 to R729 show a composition bias toward low complexity. The segment covering G738–K753 has biased composition (basic and acidic residues). S742 carries the phosphoserine modification. Residues T754–E767 are compositionally biased toward low complexity. A compositionally biased stretch (acidic residues) spans S768–E781. Positions S782–N800 are enriched in basic and acidic residues.

It belongs to the adaptor complexes large subunit family. Adaptor protein complex 3 (AP-3) is a heterotetramer composed of two large adaptins (delta-type subunit AP3D1 and beta-type subunit AP3B1 or AP3B2), a medium adaptin (mu-type subunit AP3M1 or AP3M2) and a small adaptin (sigma-type subunit APS1 or AP3S2). AP-3 associates with the BLOC-1 complex. Interacts with KIF3A; interaction is direct; interaction is impaired by pyrophosphorylation of AP3B1. In terms of processing, phosphorylated on serine residues. Pyrophosphorylation by 5-diphosphoinositol pentakisphosphate (5-IP7) impairs interaction with KIF3A. Serine pyrophosphorylation is achieved by Mg(2+)-dependent, but enzyme independent transfer of a beta-phosphate from a inositol pyrophosphate to a pre-phosphorylated serine residue.

It is found in the cytoplasmic vesicle. It localises to the clathrin-coated vesicle membrane. Its subcellular location is the golgi apparatus. Subunit of non-clathrin- and clathrin-associated adaptor protein complex 3 (AP-3) that plays a role in protein sorting in the late-Golgi/trans-Golgi network (TGN) and/or endosomes. The AP complexes mediate both the recruitment of clathrin to membranes and the recognition of sorting signals within the cytosolic tails of transmembrane cargo molecules. AP-3 appears to be involved in the sorting of a subset of transmembrane proteins targeted to lysosomes and lysosome-related organelles. In concert with the BLOC-1 complex, AP-3 is required to target cargos into vesicles assembled at cell bodies for delivery into neurites and nerve terminals. The chain is AP-3 complex subunit beta-1 (AP3B1) from Bos taurus (Bovine).